The primary structure comprises 323 residues: Acetyl-coenzyme A carboxylase carboxyl transferase subunit alpha 1 (323 aa).

The CoA carboxyltransferase C-terminal domain maps to 39–293 (RLSKKSQQLT…RRALGDSLRQ (255 aa)).

The protein belongs to the AccA family. In terms of assembly, acetyl-CoA carboxylase is a heterohexamer composed of biotin carboxyl carrier protein (AccB), biotin carboxylase (AccC) and two subunits each of ACCase subunit alpha (AccA) and ACCase subunit beta (AccD).

It is found in the cytoplasm. The enzyme catalyses N(6)-carboxybiotinyl-L-lysyl-[protein] + acetyl-CoA = N(6)-biotinyl-L-lysyl-[protein] + malonyl-CoA. The protein operates within lipid metabolism; malonyl-CoA biosynthesis; malonyl-CoA from acetyl-CoA: step 1/1. In terms of biological role, component of the acetyl coenzyme A carboxylase (ACC) complex. First, biotin carboxylase catalyzes the carboxylation of biotin on its carrier protein (BCCP) and then the CO(2) group is transferred by the carboxyltransferase to acetyl-CoA to form malonyl-CoA. Does not confer resistance to the endogenous polyketide antibiotic thailandamide, does not confer resistance to thailandamide when expressed in S.typhimurium. This Burkholderia thailandensis (strain ATCC 700388 / DSM 13276 / CCUG 48851 / CIP 106301 / E264) protein is Acetyl-coenzyme A carboxylase carboxyl transferase subunit alpha 1.